The following is a 505-amino-acid chain: Glycerol kinase (505 aa).

ADP is bound at residue threonine 14. ATP-binding residues include threonine 14, threonine 15, and serine 16. Position 14 (threonine 14) interacts with sn-glycerol 3-phosphate. Residue arginine 18 coordinates ADP. Positions 84, 85, 136, and 246 each coordinate sn-glycerol 3-phosphate. Positions 84, 85, 136, 246, and 247 each coordinate glycerol. 2 residues coordinate ADP: threonine 268 and glycine 311. 4 residues coordinate ATP: threonine 268, glycine 311, glutamine 315, and glycine 412. Residues glycine 412 and asparagine 416 each coordinate ADP.

This sequence belongs to the FGGY kinase family.

The catalysed reaction is glycerol + ATP = sn-glycerol 3-phosphate + ADP + H(+). The protein operates within polyol metabolism; glycerol degradation via glycerol kinase pathway; sn-glycerol 3-phosphate from glycerol: step 1/1. Inhibited by fructose 1,6-bisphosphate (FBP). Functionally, key enzyme in the regulation of glycerol uptake and metabolism. Catalyzes the phosphorylation of glycerol to yield sn-glycerol 3-phosphate. This chain is Glycerol kinase, found in Vibrio cholerae serotype O1 (strain M66-2).